The following is a 31-amino-acid chain: Cytochrome b6-f complex subunit 6 (31 aa).

A helical transmembrane segment spans residues 4–24; that stretch reads LLSYFGLLLAALISTLVLFIG.

Belongs to the PetL family. As to quaternary structure, the 4 large subunits of the cytochrome b6-f complex are cytochrome b6, subunit IV (17 kDa polypeptide, PetD), cytochrome f and the Rieske protein, while the 4 small subunits are PetG, PetL, PetM and PetN. The complex functions as a dimer.

It is found in the plastid. Its subcellular location is the chloroplast thylakoid membrane. In terms of biological role, component of the cytochrome b6-f complex, which mediates electron transfer between photosystem II (PSII) and photosystem I (PSI), cyclic electron flow around PSI, and state transitions. PetL is important for photoautotrophic growth as well as for electron transfer efficiency and stability of the cytochrome b6-f complex. This chain is Cytochrome b6-f complex subunit 6, found in Psilotum nudum (Whisk fern).